A 463-amino-acid polypeptide reads, in one-letter code: Autophagy-related protein 36 (463 aa).

The RING-type; atypical zinc-finger motif lies at C5–R45. The PHD-type zinc-finger motif lies at T85 to F131. The segment covering T229–N242 has biased composition (polar residues). The interval T229 to I281 is disordered. Positions K255 to G264 are enriched in basic residues.

In terms of assembly, interacts with ATG28.

Its function is as follows. Micropexophagy-specific protein required for efficient micropexophagic apparatus (MIPA) formation but not for general autophagy. This is Autophagy-related protein 36 (ATG35) from Komagataella phaffii (strain GS115 / ATCC 20864) (Yeast).